We begin with the raw amino-acid sequence, 255 residues long: Taurine import ATP-binding protein TauB (255 aa).

The ABC transporter domain occupies leucine 2–serine 229. Glycine 34–threonine 41 provides a ligand contact to ATP.

This sequence belongs to the ABC transporter superfamily. Taurine importer (TC 3.A.1.17.1) family. As to quaternary structure, the complex is composed of two ATP-binding proteins (TauB), two transmembrane proteins (TauC) and a solute-binding protein (TauA).

It is found in the cell inner membrane. It catalyses the reaction taurine(out) + ATP + H2O = taurine(in) + ADP + phosphate + H(+). Part of the ABC transporter complex TauABC involved in taurine import. Responsible for energy coupling to the transport system. This chain is Taurine import ATP-binding protein TauB, found in Shigella dysenteriae serotype 1 (strain Sd197).